Here is a 420-residue protein sequence, read N- to C-terminus: Serine hydroxymethyltransferase (420 aa).

Residues leucine 121 and 125-127 (GHL) contribute to the (6S)-5,6,7,8-tetrahydrofolate site. Residue lysine 229 is modified to N6-(pyridoxal phosphate)lysine.

Belongs to the SHMT family. As to quaternary structure, homodimer. It depends on pyridoxal 5'-phosphate as a cofactor.

The protein localises to the cytoplasm. The catalysed reaction is (6R)-5,10-methylene-5,6,7,8-tetrahydrofolate + glycine + H2O = (6S)-5,6,7,8-tetrahydrofolate + L-serine. The protein operates within one-carbon metabolism; tetrahydrofolate interconversion. It functions in the pathway amino-acid biosynthesis; glycine biosynthesis; glycine from L-serine: step 1/1. Catalyzes the reversible interconversion of serine and glycine with tetrahydrofolate (THF) serving as the one-carbon carrier. This reaction serves as the major source of one-carbon groups required for the biosynthesis of purines, thymidylate, methionine, and other important biomolecules. Also exhibits THF-independent aldolase activity toward beta-hydroxyamino acids, producing glycine and aldehydes, via a retro-aldol mechanism. The chain is Serine hydroxymethyltransferase from Streptomyces coelicolor (strain ATCC BAA-471 / A3(2) / M145).